A 309-amino-acid polypeptide reads, in one-letter code: NADH-cytochrome b5 reductase 1 (309 aa).

The chain crosses the membrane as a helical span at residues 29 to 49; it reads EFVPYAVALTAVLAGFKLFTG. The FAD-binding FR-type domain maps to 60 to 165; it reads TEFQEFVLKE…RGPKGAMVYT (106 aa). FAD contacts are provided by residues 145–160 and 171–208; these read TTLK…GPKG and HIGM…KVDL.

Belongs to the flavoprotein pyridine nucleotide cytochrome reductase family. As to quaternary structure, monomer. Component of the 2-(3-amino-3-carboxypropyl)histidine synthase complex composed of dph1, dph2, dph3 and a NADH-dependent reductase, predominantly cbr1. It depends on FAD as a cofactor.

It is found in the mitochondrion outer membrane. The enzyme catalyses 2 Fe(III)-[cytochrome b5] + NADH = 2 Fe(II)-[cytochrome b5] + NAD(+) + H(+). The catalysed reaction is 2 Fe(3+)-[Dph3] + NADH = 2 Fe(2+)-[Dph3] + NAD(+) + H(+). It functions in the pathway protein modification; peptidyl-diphthamide biosynthesis. NADH-dependent reductase for dph3 and cytochrome b5. Required for the first step of diphthamide biosynthesis, a post-translational modification of histidine which occurs in elongation factor 2. Dph1 and dph2 transfer a 3-amino-3-carboxypropyl (ACP) group from S-adenosyl-L-methionine (SAM) to a histidine residue, the reaction is assisted by a reduction system comprising dph3 and a NADH-dependent reductase, predominantly cbr1. By reducing dph3, also involved in the formation of the tRNA wobble base modification mcm5s 2U (5-methoxycarbonylmethyl-2-thiouridine), mediated by the elongator complex. The cytochrome b5/NADH cytochrome b5 reductase electron transfer system supports the catalytic activity of several sterol biosynthetic enzymes. This chain is NADH-cytochrome b5 reductase 1 (cbr1), found in Aspergillus clavatus (strain ATCC 1007 / CBS 513.65 / DSM 816 / NCTC 3887 / NRRL 1 / QM 1276 / 107).